Consider the following 397-residue polypeptide: Elongation factor Tu (397 aa).

Residues 10-206 (KPHVNIGTIG…AVDDSIPEPQ (197 aa)) form the tr-type G domain. Residues 19 to 26 (GHIDHGKT) are G1. Position 19 to 26 (19 to 26 (GHIDHGKT)) interacts with GTP. Thr-26 is a binding site for Mg(2+). Positions 62-66 (GITIS) are G2. Residues 83–86 (DCPG) are G3. GTP contacts are provided by residues 83–87 (DCPGH) and 138–141 (NKAD). Positions 138–141 (NKAD) are G4. The segment at 176-178 (SAL) is G5.

This sequence belongs to the TRAFAC class translation factor GTPase superfamily. Classic translation factor GTPase family. EF-Tu/EF-1A subfamily. Monomer.

It is found in the cytoplasm. It carries out the reaction GTP + H2O = GDP + phosphate + H(+). Functionally, GTP hydrolase that promotes the GTP-dependent binding of aminoacyl-tRNA to the A-site of ribosomes during protein biosynthesis. The protein is Elongation factor Tu of Frankia alni (strain DSM 45986 / CECT 9034 / ACN14a).